We begin with the raw amino-acid sequence, 560 residues long: Membrane protein insertase YidC (560 aa).

6 helical membrane passes run 7–27, 334–354, 357–377, 431–451, 476–496, and 522–542; these read NLIAAIVLSLSIIFGWQYFVV, AIDFGWFYIITKPVFYAMNFF, YVGNFGISILIVTVIIKLLMF, LPILVQIPVFFSIYKVLYVTI, LFGFLPFSPPSFLMIGAWPIL, and FMPLIFLVMFSSFPVGLLIYW.

It belongs to the OXA1/ALB3/YidC family. Type 1 subfamily. As to quaternary structure, interacts with the Sec translocase complex via SecD. Specifically interacts with transmembrane segments of nascent integral membrane proteins during membrane integration.

It localises to the cell inner membrane. Required for the insertion and/or proper folding and/or complex formation of integral membrane proteins into the membrane. Involved in integration of membrane proteins that insert both dependently and independently of the Sec translocase complex, as well as at least some lipoproteins. Aids folding of multispanning membrane proteins. In Rickettsia canadensis (strain McKiel), this protein is Membrane protein insertase YidC.